We begin with the raw amino-acid sequence, 324 residues long: Interleukin-12 subunit beta (324 aa).

A signal peptide spans 1–22 (MHLQQLVVSWFSLVWLASPIVA). In terms of domain architecture, Ig-like C2-type spans 23–106 (IWELEKNVYV…LSQSLLLLHK (84 aa)). A disulfide bridge connects residues Cys50 and Cys90. Residues Asn125, Asn135, and Asn218 are each glycosylated (N-linked (GlcNAc...) asparagine). Positions 233-324 (PPKNLQLNPL…WSEWASVSCN (92 aa)) constitute a Fibronectin type-III domain.

Belongs to the IL-12B family. In terms of assembly, heterodimer with IL12A; disulfide-linked. The heterodimer is known as interleukin IL-12. Heterodimer with IL23A; disulfide-linked. The heterodimer is known as interleukin IL-23. Also secreted as a monomer. Interacts with NBR1; this interaction promotes IL-12 secretion.

Its subcellular location is the secreted. Functionally, cytokine that can act as a growth factor for activated T and NK cells, enhance the lytic activity of NK/lymphokine-activated killer cells, and stimulate the production of IFN-gamma by resting PBMC. Its function is as follows. Associates with IL23A to form the IL-23 interleukin, a heterodimeric cytokine which functions in innate and adaptive immunity. IL-23 may constitute with IL-17 an acute response to infection in peripheral tissues. IL-23 binds to a heterodimeric receptor complex composed of IL12RB1 and IL23R, activates the Jak-Stat signaling cascade, stimulates memory rather than naive T-cells and promotes production of pro-inflammatory cytokines. IL-23 induces autoimmune inflammation and thus may be responsible for autoimmune inflammatory diseases and may be important for tumorigenesis. This is Interleukin-12 subunit beta (IL12B) from Sus scrofa (Pig).